We begin with the raw amino-acid sequence, 167 residues long: MLIYQDVLTGDEMISDAFPIKEIGDIAYEVDCANIIIKEGDVDIGGNPSAEEAAEALEEGAQQVNNVVHSFRLQSTSFDKKSYLTYLKGYMKAIKSKLQESNPDRVAAFEKGAQDFAKKIVANFKDYEFYIGESMNPDGMVCLLNYREDGVTPYFTMWKDGLKEIKI.

The TCTP domain occupies 1–167; sequence MLIYQDVLTG…WKDGLKEIKI (167 aa).

It belongs to the TCTP family.

The protein resides in the cytoplasm. It localises to the cytoskeleton. Involved in protein synthesis. Involved in microtubule stabilization. This chain is Translationally-controlled tumor protein homolog, found in Cryptococcus neoformans var. neoformans serotype D (strain B-3501A) (Filobasidiella neoformans).